We begin with the raw amino-acid sequence, 343 residues long: General transcription and DNA repair factor IIH subunit TFB6 (343 aa).

At Y69 the chain carries Phosphotyrosine. T71 and T84 each carry phosphothreonine. 4 positions are modified to phosphoserine: S104, S105, S108, and S342.

In terms of assembly, component of the general transcription factor TFIIH, composed of a 7-subunit TFIIH core complex composed of XPB/SSL2, XPD/RAD3, SSL1, TFB1, TFB2, TFB4 and TFB5 which is active in NER; the 3-subunit CTD-kinase module TFIIK composed of CCL1, KIN28, and TFB3 which is active in transcription; as well as TFB6 that regulates SSL2 association with the complex. In terms of processing, phosphorylation leads the dissociation of from SSL2.

The protein resides in the cytoplasm. Its subcellular location is the nucleus. Its function is as follows. Component of the general transcription and DNA repair factor IIH (TFIIH) core complex, which is involved in general and transcription-coupled nucleotide excision repair (NER) of damaged DNA and, when complexed to TFIIK, in RNA transcription by RNA polymerase II. In NER, TFIIH acts by opening DNA around the lesion to allow the excision of the damaged oligonucleotide and its replacement by a new DNA fragment. In transcription, TFIIH has an essential role in transcription initiation. When the pre-initiation complex (PIC) has been established, TFIIH is required for promoter opening and promoter escape. Phosphorylation of the C-terminal tail (CTD) of the largest subunit of RNA polymerase II by the kinase module TFIIK controls the initiation of transcription. TFB6 facilitates dissociation of the SSL2 helicase from TFIIH after transcription initiation. The polypeptide is General transcription and DNA repair factor IIH subunit TFB6 (Saccharomyces cerevisiae (strain ATCC 204508 / S288c) (Baker's yeast)).